We begin with the raw amino-acid sequence, 272 residues long: Putative pyruvate, phosphate dikinase regulatory protein (272 aa).

151-158 (GISRTSKT) is a binding site for ADP.

This sequence belongs to the pyruvate, phosphate/water dikinase regulatory protein family. PDRP subfamily.

The catalysed reaction is N(tele)-phospho-L-histidyl/L-threonyl-[pyruvate, phosphate dikinase] + ADP = N(tele)-phospho-L-histidyl/O-phospho-L-threonyl-[pyruvate, phosphate dikinase] + AMP + H(+). It carries out the reaction N(tele)-phospho-L-histidyl/O-phospho-L-threonyl-[pyruvate, phosphate dikinase] + phosphate + H(+) = N(tele)-phospho-L-histidyl/L-threonyl-[pyruvate, phosphate dikinase] + diphosphate. Its function is as follows. Bifunctional serine/threonine kinase and phosphorylase involved in the regulation of the pyruvate, phosphate dikinase (PPDK) by catalyzing its phosphorylation/dephosphorylation. In Staphylococcus aureus (strain Mu3 / ATCC 700698), this protein is Putative pyruvate, phosphate dikinase regulatory protein.